An 855-amino-acid polypeptide reads, in one-letter code: DNA mismatch repair protein MutS (855 aa).

Position 617–624 (617–624) interacts with ATP; that stretch reads GPNMGGKS.

Belongs to the DNA mismatch repair MutS family.

In terms of biological role, this protein is involved in the repair of mismatches in DNA. It is possible that it carries out the mismatch recognition step. This protein has a weak ATPase activity. In Baumannia cicadellinicola subsp. Homalodisca coagulata, this protein is DNA mismatch repair protein MutS.